Here is a 257-residue protein sequence, read N- to C-terminus: Homeobox protein EMX1 (257 aa).

Residues 159-218 constitute a DNA-binding region (homeobox); sequence PKRIRTAFSPSQLLRLERAFEKNHYVVGAERKQLAGSLSLSETQVKVWFQNRRTKYKRQK. The interval 216-257 is disordered; sequence RQKLEEEGPESEQKKKGSHHINRWRIATKQANGEDIDVTSND. Positions 217–230 are enriched in basic and acidic residues; the sequence is QKLEEEGPESEQKK.

This sequence belongs to the EMX homeobox family. In terms of assembly, interacts with WRD11 (via the N-terminal and the central portion of the protein); the interaction associates EMX1 with GLI3. Cerebral cortex. Expressed in the olfactory bulbs.

It is found in the nucleus. Transcription factor, which in cooperation with EMX2, acts to generate the boundary between the roof and archipallium in the developing brain. May function in combinations with OTX1/2 to specify cell fates in the developing central nervous system. The chain is Homeobox protein EMX1 (Emx1) from Mus musculus (Mouse).